A 104-amino-acid polypeptide reads, in one-letter code: Protein METHYLENE BLUE SENSITIVITY 2 (104 aa).

Basic residues predominate over residues 1–11; the sequence is MTGKAKPKKHT. Disordered regions lie at residues 1 to 46 and 64 to 104; these read MTGK…GHAK and IHHE…SLKK. Composition is skewed to basic and acidic residues over residues 36-46 and 73-82; these read RTGKEKGGHAK and LTYEEPRNLH.

Its subcellular location is the nucleus. It localises to the cytoplasm. The protein resides in the stress granule. Its function is as follows. Required for acclimation to reactive oxygen species (ROS) responses downstream of beta-cyclocitral, including singlet oxygen 1O(2) detoxification reactions, especially upon light-mediated photooxidative stress, and leading to programmed cell death. Prevents leaf senescence. The chain is Protein METHYLENE BLUE SENSITIVITY 2 from Arabidopsis thaliana (Mouse-ear cress).